Reading from the N-terminus, the 160-residue chain is UPF0225 protein PputW619_1140 (160 aa).

The protein belongs to the UPF0225 family.

The sequence is that of UPF0225 protein PputW619_1140 from Pseudomonas putida (strain W619).